The primary structure comprises 449 residues: Argininosuccinate synthase (449 aa).

ATP contacts are provided by residues 17–25 and Ala-43; that span reads AFSGGLDTS. Tyr-99 contributes to the L-citrulline binding site. ATP is bound by residues Gly-129 and Thr-131. The L-aspartate site is built by Thr-131, Asn-135, and Asp-136. Asn-135 serves as a coordination point for L-citrulline. Asp-136 is a binding site for ATP. The L-citrulline site is built by Arg-139 and Ser-192. An ATP-binding site is contributed by Asp-194. Residues Thr-201, Glu-203, and Glu-280 each coordinate L-citrulline.

This sequence belongs to the argininosuccinate synthase family. Type 2 subfamily. Homotetramer.

Its subcellular location is the cytoplasm. The catalysed reaction is L-citrulline + L-aspartate + ATP = 2-(N(omega)-L-arginino)succinate + AMP + diphosphate + H(+). The protein operates within amino-acid biosynthesis; L-arginine biosynthesis; L-arginine from L-ornithine and carbamoyl phosphate: step 2/3. The polypeptide is Argininosuccinate synthase (Dickeya dadantii (strain 3937) (Erwinia chrysanthemi (strain 3937))).